We begin with the raw amino-acid sequence, 832 residues long: Prickle-like protein 1 (832 aa).

In terms of domain architecture, PET spans 14-122 (FGCQRSSTSD…TIKLLSRAVM (109 aa)). LIM zinc-binding domains follow at residues 124–188 (AVCE…ELLK), 189–249 (PRCS…LYAE), and 250–313 (YCET…EDIH). Residues 314–342 (ASDSSDSAFQSARSRDSRRSVRMGRSSRS) form a disordered region. Phosphoserine is present on residues Ser-315, Ser-592, and Ser-595. 2 disordered regions span residues 663–688 (HFEE…DNAL) and 765–832 (SSST…CIIS). The span at 670–681 (RPHHHRHRRSRK) shows a compositional bias: basic residues. Ser-684 carries the phosphoserine modification. Positions 798–815 (DLSSPASALPTPQFTQRT) are enriched in polar residues. Residues 816–832 (TKSKKKKGHKGKNCIIS) are compositionally biased toward basic residues. A Cysteine methyl ester modification is found at Cys-829. Cys-829 carries the S-farnesyl cysteine lipid modification. Residues 830–832 (IIS) constitute a propeptide, removed in mature form.

It belongs to the prickle / espinas / testin family. As to quaternary structure, interacts with REST.

The protein resides in the nucleus membrane. It is found in the cytoplasm. It localises to the cytosol. Its function is as follows. Involved in the planar cell polarity pathway that controls convergent extension during gastrulation and neural tube closure. Convergent extension is a complex morphogenetic process during which cells elongate, move mediolaterally, and intercalate between neighboring cells, leading to convergence toward the mediolateral axis and extension along the anteroposterior axis. Necessary for nuclear localization of REST. May serve as nuclear receptor. The polypeptide is Prickle-like protein 1 (Prickle1) (Mus musculus (Mouse)).